The chain runs to 338 residues: MTRF1L release factor glutamine methyltransferase (338 aa).

S-adenosyl-L-methionine contacts are provided by residues 167–171, D190, W225, and N239; that span reads GCGSG. A substrate-binding site is contributed by 239–242; that stretch reads NPPY.

The protein belongs to the protein N5-glutamine methyltransferase family.

The protein resides in the mitochondrion. The enzyme catalyses L-glutaminyl-[peptide chain release factor] + S-adenosyl-L-methionine = N(5)-methyl-L-glutaminyl-[peptide chain release factor] + S-adenosyl-L-homocysteine + H(+). Functionally, N5-glutamine methyltransferase responsible for the methylation of the glutamine residue in the universally conserved GGQ motif of the mitochondrial translation release factors MTRF1, MTRF1L, MRPL58/ICT1 and MTRFR. The chain is MTRF1L release factor glutamine methyltransferase (HEMK1) from Homo sapiens (Human).